Here is a 900-residue protein sequence, read N- to C-terminus: DNA mismatch repair protein MutS (900 aa).

637–644 (GPNMAGKS) is a binding site for ATP.

This sequence belongs to the DNA mismatch repair MutS family.

This protein is involved in the repair of mismatches in DNA. It is possible that it carries out the mismatch recognition step. This protein has a weak ATPase activity. This chain is DNA mismatch repair protein MutS, found in Methanosarcina mazei (strain ATCC BAA-159 / DSM 3647 / Goe1 / Go1 / JCM 11833 / OCM 88) (Methanosarcina frisia).